The sequence spans 128 residues: Large ribosomal subunit protein bL12 (128 aa).

It belongs to the bacterial ribosomal protein bL12 family. As to quaternary structure, homodimer. Part of the ribosomal stalk of the 50S ribosomal subunit. Forms a multimeric L10(L12)X complex, where L10 forms an elongated spine to which 2 to 4 L12 dimers bind in a sequential fashion. Binds GTP-bound translation factors.

In terms of biological role, forms part of the ribosomal stalk which helps the ribosome interact with GTP-bound translation factors. Is thus essential for accurate translation. This Corynebacterium kroppenstedtii (strain DSM 44385 / JCM 11950 / CIP 105744 / CCUG 35717) protein is Large ribosomal subunit protein bL12.